We begin with the raw amino-acid sequence, 394 residues long: Elongation factor Tu (394 aa).

The 195-residue stretch at 10–204 (KPHVNIGTIG…AVDSYIPQPI (195 aa)) folds into the tr-type G domain. A G1 region spans residues 19-26 (GHVDHGKT). 19-26 (GHVDHGKT) lines the GTP pocket. Thr-26 serves as a coordination point for Mg(2+). The G2 stretch occupies residues 60–64 (GITIS). Residues 81–84 (DCPG) are G3. GTP contacts are provided by residues 81–85 (DCPGH) and 136–139 (NKVD). A G4 region spans residues 136–139 (NKVD). The interval 174 to 176 (SAL) is G5.

The protein belongs to the TRAFAC class translation factor GTPase superfamily. Classic translation factor GTPase family. EF-Tu/EF-1A subfamily. In terms of assembly, monomer.

The protein localises to the cytoplasm. The enzyme catalyses GTP + H2O = GDP + phosphate + H(+). Functionally, GTP hydrolase that promotes the GTP-dependent binding of aminoacyl-tRNA to the A-site of ribosomes during protein biosynthesis. This chain is Elongation factor Tu, found in Rickettsia typhi (strain ATCC VR-144 / Wilmington).